Consider the following 207-residue polypeptide: Probable mediator of RNA polymerase II transcription subunit 19b (207 aa).

A disordered region spans residues 99 to 207 (DTAPVELPPA…SSKLDEMGAM (109 aa)). Positions 127-152 (DRKHRKHKDKKEKDREHKKHKHKHKD) are enriched in basic residues. Residues 153-167 (RIKDKDKDKDRDKKK) show a composition bias toward basic and acidic residues. Residues 168 to 179 (EKSGHHDKKRKN) show a composition bias toward basic residues.

It belongs to the plant Mediator complex subunit 19 family. As to quaternary structure, component of the Mediator complex.

The protein resides in the nucleus. Component of the Mediator complex, a coactivator involved in the regulated transcription of nearly all RNA polymerase II-dependent genes. Mediator functions as a bridge to convey information from gene-specific regulatory proteins to the basal RNA polymerase II transcription machinery. The Mediator complex, having a compact conformation in its free form, is recruited to promoters by direct interactions with regulatory proteins and serves for the assembly of a functional preinitiation complex with RNA polymerase II and the general transcription factors. The chain is Probable mediator of RNA polymerase II transcription subunit 19b (MED19B) from Arabidopsis thaliana (Mouse-ear cress).